Here is a 365-residue protein sequence, read N- to C-terminus: NADH-quinone oxidoreductase subunit D (365 aa).

This sequence belongs to the complex I 49 kDa subunit family. In terms of assembly, NDH-1 is composed of 14 different subunits. Subunits NuoB, C, D, E, F, and G constitute the peripheral sector of the complex.

The protein resides in the cell membrane. The enzyme catalyses a quinone + NADH + 5 H(+)(in) = a quinol + NAD(+) + 4 H(+)(out). In terms of biological role, NDH-1 shuttles electrons from NADH, via FMN and iron-sulfur (Fe-S) centers, to quinones in the respiratory chain. The immediate electron acceptor for the enzyme in this species is believed to be a menaquinone. Couples the redox reaction to proton translocation (for every two electrons transferred, four hydrogen ions are translocated across the cytoplasmic membrane), and thus conserves the redox energy in a proton gradient. The sequence is that of NADH-quinone oxidoreductase subunit D from Carboxydothermus hydrogenoformans (strain ATCC BAA-161 / DSM 6008 / Z-2901).